The chain runs to 493 residues: 3-octaprenyl-4-hydroxybenzoate carboxy-lyase (493 aa).

Mn(2+) is bound at residue asparagine 172. Residues 175–177, 189–191, and 194–195 each bind prenylated FMN; these read IYR, RWL, and RG. Glutamate 238 provides a ligand contact to Mn(2+). Aspartate 287 (proton donor) is an active-site residue.

It belongs to the UbiD family. Homohexamer. Prenylated FMN serves as cofactor. The cofactor is Mn(2+).

It localises to the cell membrane. The enzyme catalyses a 4-hydroxy-3-(all-trans-polyprenyl)benzoate + H(+) = a 2-(all-trans-polyprenyl)phenol + CO2. Its pathway is cofactor biosynthesis; ubiquinone biosynthesis. Its function is as follows. Catalyzes the decarboxylation of 3-octaprenyl-4-hydroxy benzoate to 2-octaprenylphenol, an intermediate step in ubiquinone biosynthesis. In Shewanella amazonensis (strain ATCC BAA-1098 / SB2B), this protein is 3-octaprenyl-4-hydroxybenzoate carboxy-lyase.